The sequence spans 61 residues: Defensin BmKDfsin2 (61 aa).

Positions 1-24 are cleaved as a signal peptide; it reads METIVLLFLLALVFCTLEMGMVEA. Disulfide bonds link C28-C49, C35-C57, and C39-C59.

This sequence belongs to the invertebrate defensin family. Type 2 subfamily. Highly expressed in non-venom gland (hemolymph) and moderately expressed in venom gland.

Its subcellular location is the secreted. Functionally, antibacterial peptide active against Gram-positive bacteria, but not on Gram-negative bacteria. Also has weak blocking activity on Kv1.1/KCNA1, Kv1.2/KCNA2, Kv1.3/KCNA3, KCa3.1/KCNN4/IK, KCa2.3/KCNN3/SK3 and Kv11.1/KCNH2/ERG1 channels (tested at 1 uM). It inhibits potassium channel current by interacting with the pore region. The sequence is that of Defensin BmKDfsin2 from Olivierus martensii (Manchurian scorpion).